Reading from the N-terminus, the 161-residue chain is Cell division protein SepF 2 (161 aa).

Positions 19–47 are disordered; the sequence is EDSEKAPELSSSRETKTKNQNQSKSLLRS. Residues 21–35 show a composition bias toward basic and acidic residues; the sequence is SEKAPELSSSRETKT.

Belongs to the SepF family. In terms of assembly, homodimer. Interacts with FtsZ.

The protein resides in the cytoplasm. Functionally, cell division protein that is part of the divisome complex and is recruited early to the Z-ring. Probably stimulates Z-ring formation, perhaps through the cross-linking of FtsZ protofilaments. Its function overlaps with FtsA. The chain is Cell division protein SepF 2 from Desulforamulus reducens (strain ATCC BAA-1160 / DSM 100696 / MI-1) (Desulfotomaculum reducens).